We begin with the raw amino-acid sequence, 99 residues long: Small ribosomal subunit protein bS20 (99 aa).

This sequence belongs to the bacterial ribosomal protein bS20 family.

Its function is as follows. Binds directly to 16S ribosomal RNA. The sequence is that of Small ribosomal subunit protein bS20 from Caldicellulosiruptor bescii (strain ATCC BAA-1888 / DSM 6725 / KCTC 15123 / Z-1320) (Anaerocellum thermophilum).